The chain runs to 242 residues: Probable 2-phosphosulfolactate phosphatase (242 aa).

Belongs to the ComB family. Requires Mg(2+) as cofactor.

The catalysed reaction is (2R)-O-phospho-3-sulfolactate + H2O = (2R)-3-sulfolactate + phosphate. This is Probable 2-phosphosulfolactate phosphatase from Caldicellulosiruptor saccharolyticus (strain ATCC 43494 / DSM 8903 / Tp8T 6331).